Here is a 505-residue protein sequence, read N- to C-terminus: Glutamate--tRNA ligase (505 aa).

The short motif at P16–T26 is the 'HIGH' region element. The short motif at K257–R261 is the 'KMSKS' region element. K260 is an ATP binding site.

Belongs to the class-I aminoacyl-tRNA synthetase family. Glutamate--tRNA ligase type 1 subfamily. As to quaternary structure, monomer.

It localises to the cytoplasm. It carries out the reaction tRNA(Glu) + L-glutamate + ATP = L-glutamyl-tRNA(Glu) + AMP + diphosphate. Its function is as follows. Catalyzes the attachment of glutamate to tRNA(Glu) in a two-step reaction: glutamate is first activated by ATP to form Glu-AMP and then transferred to the acceptor end of tRNA(Glu). The polypeptide is Glutamate--tRNA ligase (Psychrobacter sp. (strain PRwf-1)).